The chain runs to 420 residues: Glutamyl-tRNA reductase (420 aa).

Substrate-binding positions include 49–52, serine 109, 114–116, and glutamine 120; these read TCNR and EPQ. The active-site Nucleophile is cysteine 50. 189–194 is a binding site for NADP(+); it reads GAGETI.

The protein belongs to the glutamyl-tRNA reductase family. As to quaternary structure, homodimer.

The enzyme catalyses (S)-4-amino-5-oxopentanoate + tRNA(Glu) + NADP(+) = L-glutamyl-tRNA(Glu) + NADPH + H(+). Its pathway is porphyrin-containing compound metabolism; protoporphyrin-IX biosynthesis; 5-aminolevulinate from L-glutamyl-tRNA(Glu): step 1/2. Functionally, catalyzes the NADPH-dependent reduction of glutamyl-tRNA(Glu) to glutamate 1-semialdehyde (GSA). The chain is Glutamyl-tRNA reductase from Photorhabdus laumondii subsp. laumondii (strain DSM 15139 / CIP 105565 / TT01) (Photorhabdus luminescens subsp. laumondii).